We begin with the raw amino-acid sequence, 345 residues long: Fe(3+) ions import ATP-binding protein FbpC (345 aa).

The 231-residue stretch at 3-233 (LSLKAATVRF…PADEFVARFL (231 aa)) folds into the ABC transporter domain. 35 to 42 (GPSGSGKS) is an ATP binding site.

Belongs to the ABC transporter superfamily. Fe(3+) ion importer (TC 3.A.1.10) family. The complex is composed of two ATP-binding proteins (FbpC), two transmembrane proteins (FbpB) and a solute-binding protein (FbpA).

It is found in the cell membrane. It carries out the reaction Fe(3+)(out) + ATP + H2O = Fe(3+)(in) + ADP + phosphate + H(+). Its function is as follows. Part of the ABC transporter complex FbpABC involved in Fe(3+) ions import. Responsible for energy coupling to the transport system. The protein is Fe(3+) ions import ATP-binding protein FbpC of Streptomyces avermitilis (strain ATCC 31267 / DSM 46492 / JCM 5070 / NBRC 14893 / NCIMB 12804 / NRRL 8165 / MA-4680).